A 194-amino-acid chain; its full sequence is Endoribonuclease ToxN (194 aa).

The stretch at 114–182 (MLKQYLFLKE…DQAKERDKAR (69 aa)) forms a coiled coil. The span at 171 to 182 (ERDQAKERDKAR) shows a compositional bias: basic and acidic residues. The tract at residues 171 to 194 (ERDQAKERDKARRIAYMRQMGRER) is disordered.

This sequence belongs to the ToxN/AbiQ toxin family. As to quaternary structure, one ToxN monomer binds to a 34-nt-long single repeat of the ToxI RNA; this complex forms a triangular heterohexameric complex with ToxN connected by the ToxI RNA to another toxin molecule. The ToxI repeats are cleavage products of their precursor. The ToxI repeat forms a pseudoknot which occludes the toxin active site.

Functionally, toxic component of a type III toxin-antitoxin (TA) system. An endoribonuclease which cleaves between the first and second A of AAAAA sequences; it tolerates other nucleotides in positions +2 and +4 of the consensus. Digests cognate antitoxin RNA ToxI as shown by the 2'-3'-cyclic phosphate at the 3' end of the 34-nt repeats and probably other RNAs. Inhibits growth when expressed in E.coli without causing cell lysis; this bacteriostatic effect is neutralized by cognate RNA antitoxin ToxI, which has 2.9 nearly identical 34 nucleotide-long repeats. Non-cognate antitoxin RNA from P.atrosepticum does not inhibit this toxin. The toxin-antitoxin pair function in plasmid maintenance (a plasmid addiction system), but unlike its P.atrosepticum homolog it is not seen to confer resistance to bacteriophages. The sequence is that of Endoribonuclease ToxN from Bacillus thuringiensis subsp. kurstaki.